We begin with the raw amino-acid sequence, 280 residues long: Eukaryotic translation initiation factor 3 subunit F-1 (280 aa).

The 131-residue stretch at 8 to 138 (VRVHPVVLFQ…LRSYVCIQLG (131 aa)) folds into the MPN domain.

The protein belongs to the eIF-3 subunit F family. In terms of assembly, component of the eukaryotic translation initiation factor 3 (eIF-3) complex. The eIF-3 complex interacts with pix.

It is found in the cytoplasm. Functionally, component of the eukaryotic translation initiation factor 3 (eIF-3) complex, which is involved in protein synthesis of a specialized repertoire of mRNAs and, together with other initiation factors, stimulates binding of mRNA and methionyl-tRNAi to the 40S ribosome. The eIF-3 complex specifically targets and initiates translation of a subset of mRNAs involved in cell proliferation. The chain is Eukaryotic translation initiation factor 3 subunit F-1 from Drosophila persimilis (Fruit fly).